The following is a 508-amino-acid chain: Maturase K (508 aa).

The protein belongs to the intron maturase 2 family. MatK subfamily.

It localises to the plastid. The protein resides in the chloroplast. Usually encoded in the trnK tRNA gene intron. Probably assists in splicing its own and other chloroplast group II introns. The polypeptide is Maturase K (Ranunculus glacialis (Glacier buttercup)).